The primary structure comprises 245 residues: Galectin-3 (245 aa).

The interval 1 to 30 is disordered; sequence MADGFSLNDALAGSGNPNPQGWPGAWGNQP. N-acetylalanine is present on Ala2. Ser6 bears the Phosphoserine; by CK1 mark. 4 consecutive repeat copies span residues 35–43, 44–52, 53–61, and 62–70. Positions 35 to 99 are 7 X 9 AA tandem repeats of Y-P-G-X(3)-P-[GS]-A; sequence YPGASYPGAY…PSAPGAYPAA (65 aa). The tract at residues 47 to 68 is disordered; it reads QAPPGAYPGQAPPGAYPGPTAP. One copy of the 5; approximate repeat lies at 71–78; the sequence is YPGPAPGA. One copy of the 6; approximate repeat lies at 79 to 88; the sequence is YPGQPGASGA. The stretch at 89 to 99 is one 7; approximate repeat; sequence YPSAPGAYPAA. The region spanning 113–243 is the Galectin domain; that stretch reads YKLPLAGGVM…DITLTSAAPT (131 aa). An a beta-D-galactoside-binding site is contributed by 176–182; it reads WGREERQ. The residue at position 183 (Ser183) is a Phosphoserine. The Nuclear export signal signature appears at 221-236; it reads KNLREINQMEISGDIT.

In terms of assembly, probably forms homo- or heterodimers. Interacts with DMBT1. Interacts with CD6 and ALCAM. Forms a complex with the ITGA3, ITGB1 and CSPG4. Interacts with LGALS3BP, LYPD3, ZFTRAF1 and UACA. Interacts with TRIM16; this interaction mediates autophagy of damage endomembranes. Interacts with cargo receptor TMED10; the interaction mediates the translocation from the cytoplasm into the ERGIC (endoplasmic reticulum-Golgi intermediate compartment) and thereby secretion. Interacts with and inhibits by binding NCR3/NKp30.

Its subcellular location is the cytoplasm. The protein resides in the nucleus. The protein localises to the secreted. In terms of biological role, galactose-specific lectin which binds IgE. May mediate with the alpha-3, beta-1 integrin the stimulation by CSPG4 of endothelial cells migration. Together with DMBT1, required for terminal differentiation of columnar epithelial cells during early embryogenesis. In the nucleus: acts as a pre-mRNA splicing factor. Involved in acute inflammatory responses including neutrophil activation and adhesion, chemoattraction of monocytes macrophages, opsonization of apoptotic neutrophils, and activation of mast cells. Together with TRIM16, coordinates the recognition of membrane damage with mobilization of the core autophagy regulators ATG16L1 and BECN1 in response to damaged endomembranes. When secreted, interacts with NK cell-activating receptor NCR3/NKp30 acting as an inhibitory ligand which antagonizes NK cell attack. The sequence is that of Galectin-3 (LGALS3) from Cricetulus longicaudatus (Long-tailed dwarf hamster).